Consider the following 122-residue polypeptide: Venom protein 7.1 (122 aa).

Residues 1–19 (MRFSIISASLVLIFANVKA) form the signal peptide.

In terms of processing, contains 3 disulfide bonds. In terms of tissue distribution, expressed by the venom gland.

It localises to the secreted. The chain is Venom protein 7.1 from Lychas mucronatus (Chinese swimming scorpion).